The chain runs to 196 residues: Orotate phosphoribosyltransferase (196 aa).

117 to 125 (EDIVTTGLS) is a 5-phospho-alpha-D-ribose 1-diphosphate binding site. Positions 121 and 149 each coordinate orotate.

This sequence belongs to the purine/pyrimidine phosphoribosyltransferase family. PyrE subfamily. Homodimer. Requires Mg(2+) as cofactor.

The enzyme catalyses orotidine 5'-phosphate + diphosphate = orotate + 5-phospho-alpha-D-ribose 1-diphosphate. It participates in pyrimidine metabolism; UMP biosynthesis via de novo pathway; UMP from orotate: step 1/2. Its function is as follows. Catalyzes the transfer of a ribosyl phosphate group from 5-phosphoribose 1-diphosphate to orotate, leading to the formation of orotidine monophosphate (OMP). This chain is Orotate phosphoribosyltransferase, found in Methylorubrum extorquens (strain PA1) (Methylobacterium extorquens).